Reading from the N-terminus, the 369-residue chain is Putative cyclin-F1-1 (369 aa).

Residues 328–350 form a disordered region; it reads AQHHLESKPAGAAGVGINSSGDD.

This sequence belongs to the cyclin family. Cyclin F subfamily.

This chain is Putative cyclin-F1-1 (CYCF1-1), found in Oryza sativa subsp. japonica (Rice).